We begin with the raw amino-acid sequence, 465 residues long: COP9 signalosome complex subunit 5 (465 aa).

The 143-residue stretch at 74–216 folds into the MPN domain; the sequence is VLLSKLACSK…IGSFRTYQDQ (143 aa). H162, H164, and D175 together coordinate Zn(2+). The JAMM motif motif lies at 162 to 175; that stretch reads HSHPGYDCWLSNID. Residues 364–386 are disordered; sequence SSIHTQMNNQNNQQERNSPKRPH.

This sequence belongs to the peptidase M67A family. CSN5 subfamily. Component of the COP9 signalosome (CSN) complex.

The protein localises to the cytoplasm. Its subcellular location is the nucleus. Functionally, catalytic Component of the COP9 signalosome (CSN) complex that acts as an regulator of the ubiquitin (Ubl) conjugation pathway by mediating the deneddylation of the cullin subunit of SCF-type E3 ubiquitin-protein ligase complexes. This Candida glabrata (strain ATCC 2001 / BCRC 20586 / JCM 3761 / NBRC 0622 / NRRL Y-65 / CBS 138) (Yeast) protein is COP9 signalosome complex subunit 5 (RRI1).